The following is a 341-amino-acid chain: Probable dual-specificity RNA methyltransferase RlmN (341 aa).

Residue Glu88 is the Proton acceptor of the active site. The 221-residue stretch at 94-314 (EGDRATLCIS…ESHGFTCTIR (221 aa)) folds into the Radical SAM core domain. A disulfide bridge links Cys101 with Cys325. [4Fe-4S] cluster contacts are provided by Cys108, Cys112, and Cys115. S-adenosyl-L-methionine is bound by residues 153–154 (GE), Ser185, 206–208 (SLH), and His282. The active-site S-methylcysteine intermediate is Cys325.

It belongs to the radical SAM superfamily. RlmN family. [4Fe-4S] cluster is required as a cofactor.

The protein resides in the cytoplasm. It carries out the reaction adenosine(2503) in 23S rRNA + 2 reduced [2Fe-2S]-[ferredoxin] + 2 S-adenosyl-L-methionine = 2-methyladenosine(2503) in 23S rRNA + 5'-deoxyadenosine + L-methionine + 2 oxidized [2Fe-2S]-[ferredoxin] + S-adenosyl-L-homocysteine. It catalyses the reaction adenosine(37) in tRNA + 2 reduced [2Fe-2S]-[ferredoxin] + 2 S-adenosyl-L-methionine = 2-methyladenosine(37) in tRNA + 5'-deoxyadenosine + L-methionine + 2 oxidized [2Fe-2S]-[ferredoxin] + S-adenosyl-L-homocysteine. Specifically methylates position 2 of adenine 2503 in 23S rRNA and position 2 of adenine 37 in tRNAs. The polypeptide is Probable dual-specificity RNA methyltransferase RlmN (Porphyromonas gingivalis (strain ATCC BAA-308 / W83)).